We begin with the raw amino-acid sequence, 453 residues long: Ribulose bisphosphate carboxylase large chain (453 aa).

A propeptide spanning residues 1-2 (MS) is cleaved from the precursor. Pro-3 is subject to N-acetylproline. An N6,N6,N6-trimethyllysine modification is found at Lys-14. Substrate contacts are provided by Asn-123 and Thr-173. Lys-175 acts as the Proton acceptor in catalysis. Lys-177 is a binding site for substrate. Lys-201, Asp-203, and Glu-204 together coordinate Mg(2+). The residue at position 201 (Lys-201) is an N6-carboxylysine. His-294 functions as the Proton acceptor in the catalytic mechanism. The substrate site is built by Arg-295, His-327, and Ser-379.

This sequence belongs to the RuBisCO large chain family. Type I subfamily. As to quaternary structure, heterohexadecamer of 8 large chains and 8 small chains; disulfide-linked. The disulfide link is formed within the large subunit homodimers. It depends on Mg(2+) as a cofactor. In terms of processing, the disulfide bond which can form in the large chain dimeric partners within the hexadecamer appears to be associated with oxidative stress and protein turnover.

The protein localises to the plastid. It is found in the chloroplast. It catalyses the reaction 2 (2R)-3-phosphoglycerate + 2 H(+) = D-ribulose 1,5-bisphosphate + CO2 + H2O. The catalysed reaction is D-ribulose 1,5-bisphosphate + O2 = 2-phosphoglycolate + (2R)-3-phosphoglycerate + 2 H(+). Functionally, ruBisCO catalyzes two reactions: the carboxylation of D-ribulose 1,5-bisphosphate, the primary event in carbon dioxide fixation, as well as the oxidative fragmentation of the pentose substrate in the photorespiration process. Both reactions occur simultaneously and in competition at the same active site. The protein is Ribulose bisphosphate carboxylase large chain of Hydnophytum formicarum (Ant plant).